A 584-amino-acid polypeptide reads, in one-letter code: Peroxynitrite isomerase THAP4 (584 aa).

The THAP-type zinc-finger motif lies at 1 to 85 (MVICCAAANC…LKPTAVPSIF (85 aa)). The segment at 84-330 (IFHLAEKKRR…EAVQSEHSDA (247 aa)) is disordered. A compositionally biased stretch (basic residues) spans 89 to 104 (EKKRRAGGHGRPRRRD). A compositionally biased stretch (low complexity) spans 122–138 (GKAAAGSPSSSSASPMA). The span at 158–178 (AARETAGQERGRQPLEGRAED) shows a compositional bias: basic and acidic residues. The span at 190–208 (GEAGTGAEDAGEEGATPAD) shows a compositional bias: low complexity. The HCFC1-binding motif (HBM) motif lies at 236–239 (LHSY). At S240 the chain carries Phosphoserine. Over residues 248-267 (ERPAVPREPVERKRLRRDAE) the composition is skewed to basic and acidic residues. Positions 422–584 (PPKMSPVVEP…LHVTYKKVTP (163 aa)) are nitrobindin. Positions 451 and 574 each coordinate heme b.

The protein in the C-terminal section; belongs to the nitrobindin family. In terms of assembly, homodimer. Heme b is required as a cofactor.

Its subcellular location is the cytoplasm. The protein localises to the nucleus. The enzyme catalyses peroxynitrite = nitrate. It functions in the pathway nitrogen metabolism. In terms of biological role, heme-binding protein able to scavenge peroxynitrite and to protect free L-tyrosine against peroxynitrite-mediated nitration, by acting as a peroxynitrite isomerase that converts peroxynitrite to nitrate. Therefore, this protein likely plays a role in peroxynitrite sensing and in the detoxification of reactive nitrogen and oxygen species (RNS and ROS, respectively). Is able to bind nitric oxide (NO) in vitro, but may act as a sensor of peroxynitrite levels in vivo, possibly modulating the transcriptional activity residing in the N-terminal region. The polypeptide is Peroxynitrite isomerase THAP4 (Bos taurus (Bovine)).